Here is a 341-residue protein sequence, read N- to C-terminus: Anthranilate phosphoribosyltransferase (341 aa).

5-phospho-alpha-D-ribose 1-diphosphate-binding positions include Gly80, 83-84 (GD), Thr88, 90-93 (NIST), 108-116 (KHGNYSVSS), and Ser120. Residue Gly80 participates in anthranilate binding. A Mg(2+)-binding site is contributed by Ser92. Position 111 (Asn111) interacts with anthranilate. Arg166 contacts anthranilate. 2 residues coordinate Mg(2+): Asp224 and Glu225.

The protein belongs to the anthranilate phosphoribosyltransferase family. In terms of assembly, homodimer. The cofactor is Mg(2+).

The catalysed reaction is N-(5-phospho-beta-D-ribosyl)anthranilate + diphosphate = 5-phospho-alpha-D-ribose 1-diphosphate + anthranilate. Its pathway is amino-acid biosynthesis; L-tryptophan biosynthesis; L-tryptophan from chorismate: step 2/5. Catalyzes the transfer of the phosphoribosyl group of 5-phosphorylribose-1-pyrophosphate (PRPP) to anthranilate to yield N-(5'-phosphoribosyl)-anthranilate (PRA). The polypeptide is Anthranilate phosphoribosyltransferase (Haloquadratum walsbyi (strain DSM 16790 / HBSQ001)).